Reading from the N-terminus, the 171-residue chain is Lipoprotein signal peptidase (171 aa).

3 consecutive transmembrane segments (helical) span residues 12–32, 67–87, and 93–113; these read WYWV…WVLA, WQRW…TVWL, and SLLK…GNLV. Catalysis depends on residues Asp-123 and Asp-141. The helical transmembrane segment at 137–157 threads the bilayer; sequence FNIADSAICIGAVLIIWDAFL.

This sequence belongs to the peptidase A8 family.

The protein localises to the cell inner membrane. The enzyme catalyses Release of signal peptides from bacterial membrane prolipoproteins. Hydrolyzes -Xaa-Yaa-Zaa-|-(S,diacylglyceryl)Cys-, in which Xaa is hydrophobic (preferably Leu), and Yaa (Ala or Ser) and Zaa (Gly or Ala) have small, neutral side chains.. The protein operates within protein modification; lipoprotein biosynthesis (signal peptide cleavage). In terms of biological role, this protein specifically catalyzes the removal of signal peptides from prolipoproteins. The polypeptide is Lipoprotein signal peptidase (Shewanella baltica (strain OS223)).